Consider the following 230-residue polypeptide: Uracil-DNA glycosylase (230 aa).

The active-site Proton acceptor is Asp65.

This sequence belongs to the uracil-DNA glycosylase (UDG) superfamily. UNG family.

It localises to the cytoplasm. The catalysed reaction is Hydrolyzes single-stranded DNA or mismatched double-stranded DNA and polynucleotides, releasing free uracil.. Excises uracil residues from the DNA which can arise as a result of misincorporation of dUMP residues by DNA polymerase or due to deamination of cytosine. This chain is Uracil-DNA glycosylase, found in Pediococcus pentosaceus (strain ATCC 25745 / CCUG 21536 / LMG 10740 / 183-1w).